The chain runs to 172 residues: MAKEASGNVYFDVYANEESLGRIVMKLEDDIVPKTAKNFRTLCERPKGEGYKGSTFHRIIPGFMVQGGDYTAHNGTGGRSIYGEKFPDENFELKHTKEGILSMANCGAHTNGSQFFITLGKTQWLDEKHVVFGEVVEGMDVVHKIAKYGSESGQVKKGYRIEIRDCGVLGSN.

The region spanning 10 to 168 is the PPIase cyclophilin-type domain; it reads YFDVYANEES…YRIEIRDCGV (159 aa).

It belongs to the cyclophilin-type PPIase family.

The protein resides in the cytoplasm. The catalysed reaction is [protein]-peptidylproline (omega=180) = [protein]-peptidylproline (omega=0). Its function is as follows. PPIases accelerate the folding of proteins. They catalyze the cis-trans isomerization of proline imidic peptide bonds in oligopeptides. This Encephalitozoon cuniculi (strain GB-M1) (Microsporidian parasite) protein is Peptidyl-prolyl cis-trans isomerase (CPR1).